A 411-amino-acid polypeptide reads, in one-letter code: Arginine deiminase (411 aa).

The active-site Amidino-cysteine intermediate is the Cys-401.

This sequence belongs to the arginine deiminase family.

It localises to the cytoplasm. It catalyses the reaction L-arginine + H2O = L-citrulline + NH4(+). The protein operates within amino-acid degradation; L-arginine degradation via ADI pathway; carbamoyl phosphate from L-arginine: step 1/2. The polypeptide is Arginine deiminase (Streptococcus equi subsp. zooepidemicus (strain MGCS10565)).